The primary structure comprises 181 residues: MRIAFFLLVLAVIIGFAYGYSCPKPCYGNMCCSTSPNNQYYLTDFCGSTSACGPVPSCSGALYFTADSQRFGCGKYLNLCRSGKCVKAQIYDAGPAMWVEQDAGMMIIDASPTICHVLTGGSSCGWSDHFLITATVTSLTDSRPLGPFNVTESEMAQLFIDHEIAMAQCEAEKTCNGFDLE.

An N-terminal signal peptide occupies residues 1–19 (MRIAFFLLVLAVIIGFAYG). The propeptide occupies 139–181 (LTDSRPLGPFNVTESEMAQLFIDHEIAMAQCEAEKTCNGFDLE).

This sequence belongs to the dictyostelium lysozyme family. Post-translationally, contains six disulfide bonds.

Its subcellular location is the cytoplasmic vesicle lumen. It catalyses the reaction Hydrolysis of 1,4-beta-linkages between N-acetylmuramic acid and N-acetyl-D-glucosamine residues in a peptidoglycan.. Has antibacterial activity against the Gram-positive bacteria B.subtilis, B.megaterium and M.luteus. No antibacterial activity detected against the Gram-positive bacterium S.aureus or against the Gram-negative bacterium E.coli. Lacks chitinase activity. The polypeptide is Lysozyme A (Dictyostelium discoideum (Social amoeba)).